We begin with the raw amino-acid sequence, 66 residues long: Small vasohibin-binding protein (66 aa).

The segment covering 1-23 (MDPPARKEKPKVKEPVSRIEKAK) has biased composition (basic and acidic residues). The tract at residues 1–32 (MDPPARKEKPKVKEPVSRIEKAKQKSAQQELK) is disordered. Residues 5 to 52 (ARKEKPKVKEPVSRIEKAKQKSAQQELKQRQRAEIYALNRVMTELEQQ) are a coiled coil.

This sequence belongs to the SVBP family. In terms of assembly, interacts with VASH1 and VASH2.

The protein localises to the cytoplasm. Its subcellular location is the secreted. It localises to the cytoskeleton. Enhances the tyrosine carboxypeptidase activity of VASH1 and VASH2, thereby promoting the removal of the C-terminal tyrosine residue of alpha-tubulin. Also required to enhance the solubility and secretion of VASH1 and VASH2. Plays a role in axon and excitatory synapse formation. The protein is Small vasohibin-binding protein of Bos taurus (Bovine).